Consider the following 217-residue polypeptide: Ribulose-phosphate 3-epimerase (217 aa).

Ser6 contributes to the substrate binding site. His29, Asp31, and His62 together coordinate a divalent metal cation. Asp31 (proton acceptor) is an active-site residue. Substrate contacts are provided by residues His62, 138–141 (GFGG), 171–173 (DGG), and 193–194 (GS). Asp171 contacts a divalent metal cation. The active-site Proton donor is Asp171.

This sequence belongs to the ribulose-phosphate 3-epimerase family. It depends on a divalent metal cation as a cofactor.

The catalysed reaction is D-ribulose 5-phosphate = D-xylulose 5-phosphate. It functions in the pathway carbohydrate degradation. Catalyzes the reversible epimerization of D-ribulose 5-phosphate to D-xylulose 5-phosphate. In Helicobacter pylori (strain ATCC 700392 / 26695) (Campylobacter pylori), this protein is Ribulose-phosphate 3-epimerase.